We begin with the raw amino-acid sequence, 174 residues long: Large ribosomal subunit protein uL10 (174 aa).

Belongs to the universal ribosomal protein uL10 family. Part of the ribosomal stalk of the 50S ribosomal subunit. The N-terminus interacts with L11 and the large rRNA to form the base of the stalk. The C-terminus forms an elongated spine to which L12 dimers bind in a sequential fashion forming a multimeric L10(L12)X complex.

In terms of biological role, forms part of the ribosomal stalk, playing a central role in the interaction of the ribosome with GTP-bound translation factors. The polypeptide is Large ribosomal subunit protein uL10 (Syntrophus aciditrophicus (strain SB)).